Reading from the N-terminus, the 353-residue chain is Small ribosomal subunit protein uS2 (353 aa).

The segment at 256 to 353 (DTDEQSSAAN…TPAESTDEQA (98 aa)) is disordered. Low complexity-rich tracts occupy residues 263-311 (AANT…AEAP) and 321-339 (ESAT…TPAE). Over residues 340–353 (AEAETPAESTDEQA) the composition is skewed to acidic residues.

It belongs to the universal ribosomal protein uS2 family.

In Beutenbergia cavernae (strain ATCC BAA-8 / DSM 12333 / CCUG 43141 / JCM 11478 / NBRC 16432 / NCIMB 13614 / HKI 0122), this protein is Small ribosomal subunit protein uS2.